The following is a 239-amino-acid chain: 1-(5-phosphoribosyl)-5-[(5-phosphoribosylamino)methylideneamino] imidazole-4-carboxamide isomerase (239 aa).

Asp9 functions as the Proton acceptor in the catalytic mechanism. Asp131 (proton donor) is an active-site residue.

This sequence belongs to the HisA/HisF family.

It localises to the cytoplasm. It carries out the reaction 1-(5-phospho-beta-D-ribosyl)-5-[(5-phospho-beta-D-ribosylamino)methylideneamino]imidazole-4-carboxamide = 5-[(5-phospho-1-deoxy-D-ribulos-1-ylimino)methylamino]-1-(5-phospho-beta-D-ribosyl)imidazole-4-carboxamide. It participates in amino-acid biosynthesis; L-histidine biosynthesis; L-histidine from 5-phospho-alpha-D-ribose 1-diphosphate: step 4/9. The protein is 1-(5-phosphoribosyl)-5-[(5-phosphoribosylamino)methylideneamino] imidazole-4-carboxamide isomerase of Phocaeicola vulgatus (strain ATCC 8482 / DSM 1447 / JCM 5826 / CCUG 4940 / NBRC 14291 / NCTC 11154) (Bacteroides vulgatus).